The primary structure comprises 340 residues: 4-hydroxy-2-oxovalerate aldolase (340 aa).

Residues 5–255 form the Pyruvate carboxyltransferase domain; that stretch reads IVITEVALRD…QTGVDLYKMM (251 aa). 13–14 serves as a coordination point for substrate; the sequence is RD. Aspartate 14 is a binding site for Mn(2+). The Proton acceptor role is filled by histidine 17. The substrate site is built by serine 167 and histidine 194. Residues histidine 194 and histidine 196 each coordinate Mn(2+). Position 285 (tyrosine 285) interacts with substrate.

This sequence belongs to the 4-hydroxy-2-oxovalerate aldolase family.

The enzyme catalyses (S)-4-hydroxy-2-oxopentanoate = acetaldehyde + pyruvate. The chain is 4-hydroxy-2-oxovalerate aldolase from Brevibacillus brevis (strain 47 / JCM 6285 / NBRC 100599).